A 578-amino-acid polypeptide reads, in one-letter code: Translation initiation factor eIF2B subunit gamma (578 aa).

Ser-296 and Ser-300 each carry phosphoserine. 2 disordered regions span residues 298 to 337 (QASF…SATS) and 535 to 578 (DDSV…LFER). A Phosphothreonine modification is found at Thr-306. A compositionally biased stretch (acidic residues) spans 544–578 (EIAEETDSDDRSDEDSDDSEYTDEYEYEDDGLFER).

It belongs to the eIF-2B gamma/epsilon subunits family. As to quaternary structure, component of the translation initiation factor 2B (eIF2B) complex which is a heterodecamer of two sets of five different subunits: alpha, beta, gamma, delta and epsilon. Subunits alpha, beta and delta comprise a regulatory subcomplex and subunits epsilon and gamma comprise a catalytic subcomplex. Within the complex, the hexameric regulatory complex resides at the center, with the two heterodimeric catalytic subcomplexes bound on opposite sides.

It is found in the cytoplasm. The protein resides in the cytosol. Its function is as follows. Acts as a component of the translation initiation factor 2B (eIF2B) complex, which catalyzes the exchange of GDP for GTP on the eukaryotic initiation factor 2 (eIF2) complex gamma subunit. Its guanine nucleotide exchange factor activity is repressed when bound to eIF2 complex phosphorylated on the alpha subunit, thereby limiting the amount of methionyl-initiator methionine tRNA available to the ribosome and consequently global translation is repressed. It activates the synthesis of GCN4 in yeast under amino acid starvation conditions by suppressing the inhibitory effects of multiple AUG codons present in the leader of GCN4 mRNA. It may promote either repression or activation of GCN4 expression depending on amino acid availability. GCD1 stabilizes the interaction between eIF2 and GCD6 and stimulates the catalytic activity in vitro. The polypeptide is Translation initiation factor eIF2B subunit gamma (GCD1) (Saccharomyces cerevisiae (strain ATCC 204508 / S288c) (Baker's yeast)).